The primary structure comprises 104 residues: Large ribosomal subunit protein bL21 (104 aa).

The protein belongs to the bacterial ribosomal protein bL21 family. In terms of assembly, part of the 50S ribosomal subunit. Contacts protein L20.

Its function is as follows. This protein binds to 23S rRNA in the presence of protein L20. This is Large ribosomal subunit protein bL21 from Allorhizobium ampelinum (strain ATCC BAA-846 / DSM 112012 / S4) (Agrobacterium vitis (strain S4)).